We begin with the raw amino-acid sequence, 418 residues long: Putative competence-damage inducible protein (418 aa).

This sequence belongs to the CinA family.

The sequence is that of Putative competence-damage inducible protein from Streptococcus pneumoniae (strain 70585).